We begin with the raw amino-acid sequence, 447 residues long: MEKARALEEQWPGARDAFHVPSYASLGLGDQTAAVRYLCGHSLGCMPRKTRGSVEAELSAWSARAVEAHVRHPGGTEWVNTDLPLVPQMARMVGASQQEVAVMGSLTANLNALLVAFYRPRGRRTKILLEKQVFPSDFHAFWNQAALHGLDPAATLVQVAPRAGEHTLRTEDIVAAIETHRAELALVCLPGVQYYTGQLLDMASIVAAARREPSIVVGFDLAHAVGNVQLQLHEWGADFACWCSYKYLNAGPGGIAGLFVHERHHGGTLPRLAGWWGTNAATRFEMRQTYDPLPDALGFRQSNPSVLDVAALRASLEVFEDFGGMERVRARSLALTGYLYELLTQSVFYRPEVGADGVGFTILTPANPAERGAQLSLLFWPHSDDPDKNTMPRVFADLRQNGVLGDERHPDVIRLTPCALYNTFMEVFESVQLLNAALERLAPESAV.

Pyridoxal 5'-phosphate is bound by residues Leu-106, Thr-107, 134 to 137 (FPSD), Asp-220, His-223, and Tyr-245. Lys-246 carries the N6-(pyridoxal phosphate)lysine modification. Trp-275 and Asn-303 together coordinate pyridoxal 5'-phosphate.

It belongs to the kynureninase family. As to quaternary structure, homodimer. Requires pyridoxal 5'-phosphate as cofactor.

The protein resides in the cytoplasm. The catalysed reaction is L-kynurenine + H2O = anthranilate + L-alanine + H(+). It catalyses the reaction 3-hydroxy-L-kynurenine + H2O = 3-hydroxyanthranilate + L-alanine + H(+). Its pathway is amino-acid degradation; L-kynurenine degradation; L-alanine and anthranilate from L-kynurenine: step 1/1. It participates in cofactor biosynthesis; NAD(+) biosynthesis; quinolinate from L-kynurenine: step 2/3. In terms of biological role, catalyzes the cleavage of L-kynurenine (L-Kyn) and L-3-hydroxykynurenine (L-3OHKyn) into anthranilic acid (AA) and 3-hydroxyanthranilic acid (3-OHAA), respectively. In Eremothecium gossypii (strain ATCC 10895 / CBS 109.51 / FGSC 9923 / NRRL Y-1056) (Yeast), this protein is Kynureninase.